We begin with the raw amino-acid sequence, 323 residues long: Pseudouridylate synthase TRUB2, mitochondrial (323 aa).

The active-site Nucleophile is the Asp98. A disordered region spans residues 302–323 (SGHQQQLPSAGQPWASRVQAPL).

It belongs to the pseudouridine synthase TruB family. Forms a regulatory protein-RNA complex, consisting of RCC1L, NGRN, RPUSD3, RPUSD4, TRUB2, FASTKD2 and 16S mt-rRNA.

The protein resides in the mitochondrion matrix. It catalyses the reaction a uridine in mRNA = a pseudouridine in mRNA. The catalysed reaction is uridine(55) in tRNA = pseudouridine(55) in tRNA. In terms of biological role, minor enzyme contributing to the isomerization of uridine to pseudouridine (pseudouridylation) of specific mitochondrial mRNAs (mt-mRNAs) such as COXI and COXIII mt-mRNAs. As a component of a functional protein-RNA module, consisting of RCC1L, NGRN, RPUSD3, RPUSD4, TRUB2, FASTKD2 and 16S mitochondrial ribosomal RNA (16S mt-rRNA), controls 16S mt-rRNA abundance and is required for intra-mitochondrial translation. Also catalyzes pseudouridylation of some tRNAs, including synthesis of pseudouridine(55) from uracil-55, in the psi GC loop of a subset of tRNAs. The protein is Pseudouridylate synthase TRUB2, mitochondrial of Rattus norvegicus (Rat).